The following is a 678-amino-acid chain: Mitogen-activated protein kinase kinase kinase 7 (678 aa).

In terms of domain architecture, Protein kinase spans 19-271 (ITLREKVGHG…YIVGVMHEIV (253 aa)). Residues 25–33 (VGHGSYGVV) and Lys46 contribute to the ATP site. Asp140 functions as the Proton acceptor in the catalytic mechanism. 4 disordered regions span residues 296–322 (DGTV…QLTP), 339–365 (TTSS…LDNN), 431–455 (DLSP…LTVT), and 616–647 (QLAA…HFLQ). Composition is skewed to low complexity over residues 313 to 322 (LSPSSTQLTP) and 339 to 352 (TTSS…STSS). Over residues 353–364 (DITPTNSGQLDN) the composition is skewed to polar residues.

It belongs to the protein kinase superfamily. STE Ser/Thr protein kinase family. MAP kinase kinase kinase subfamily. Requires Mg(2+) as cofactor.

The catalysed reaction is L-seryl-[protein] + ATP = O-phospho-L-seryl-[protein] + ADP + H(+). It carries out the reaction L-threonyl-[protein] + ATP = O-phospho-L-threonyl-[protein] + ADP + H(+). Functionally, component of a protein kinase signal transduction cascade. Mediator of TGF-beta signal transduction. Responsible for activation of the JNK MAPK pathway (basket, bsk and hemipterous, hep) in response to LPS. Component of the NF-kappa-B pathway; relish-mediated JNK inhibition involves proteasomal degradation of Tak1; certain targets of Relish that are induced during immune responses may facilitate destruction of Tak1 and switch off the JNK cascade. Participates in diverse roles such as control of cell shape and regulation of apoptosis. This is Mitogen-activated protein kinase kinase kinase 7 (Tak1) from Drosophila melanogaster (Fruit fly).